Here is a 124-residue protein sequence, read N- to C-terminus: Small ribosomal subunit protein uS12 (124 aa).

A disordered region spans residues M1 to P28. D89 is modified (3-methylthioaspartic acid). The segment at T104 to E124 is disordered.

The protein belongs to the universal ribosomal protein uS12 family. As to quaternary structure, part of the 30S ribosomal subunit. Contacts proteins S8 and S17. May interact with IF1 in the 30S initiation complex.

In terms of biological role, with S4 and S5 plays an important role in translational accuracy. Its function is as follows. Interacts with and stabilizes bases of the 16S rRNA that are involved in tRNA selection in the A site and with the mRNA backbone. Located at the interface of the 30S and 50S subunits, it traverses the body of the 30S subunit contacting proteins on the other side and probably holding the rRNA structure together. The combined cluster of proteins S8, S12 and S17 appears to hold together the shoulder and platform of the 30S subunit. This is Small ribosomal subunit protein uS12 from Synechococcus sp. (strain WH7803).